An 86-amino-acid polypeptide reads, in one-letter code: Small ribosomal subunit protein bS20 (86 aa).

The interval 1-27 (MANSKSAKKRAIQAEKRRQHNASRRSM) is disordered.

This sequence belongs to the bacterial ribosomal protein bS20 family.

Binds directly to 16S ribosomal RNA. This Vibrio atlanticus (strain LGP32) (Vibrio splendidus (strain Mel32)) protein is Small ribosomal subunit protein bS20.